Reading from the N-terminus, the 903-residue chain is Alanine--tRNA ligase (903 aa).

Zn(2+) is bound by residues His-581, His-585, Cys-693, and His-697.

This sequence belongs to the class-II aminoacyl-tRNA synthetase family. The cofactor is Zn(2+).

It localises to the cytoplasm. The catalysed reaction is tRNA(Ala) + L-alanine + ATP = L-alanyl-tRNA(Ala) + AMP + diphosphate. Functionally, catalyzes the attachment of alanine to tRNA(Ala) in a two-step reaction: alanine is first activated by ATP to form Ala-AMP and then transferred to the acceptor end of tRNA(Ala). Also edits incorrectly charged Ser-tRNA(Ala) and Gly-tRNA(Ala) via its editing domain. The polypeptide is Alanine--tRNA ligase (Psychrobacter sp. (strain PRwf-1)).